The following is a 424-amino-acid chain: Histidine--tRNA ligase (424 aa).

Belongs to the class-II aminoacyl-tRNA synthetase family. Homodimer.

It localises to the cytoplasm. The catalysed reaction is tRNA(His) + L-histidine + ATP = L-histidyl-tRNA(His) + AMP + diphosphate + H(+). The polypeptide is Histidine--tRNA ligase (Shewanella denitrificans (strain OS217 / ATCC BAA-1090 / DSM 15013)).